The following is a 307-amino-acid chain: Glycine--tRNA ligase alpha subunit (307 aa).

It belongs to the class-II aminoacyl-tRNA synthetase family. Tetramer of two alpha and two beta subunits.

The protein resides in the cytoplasm. It catalyses the reaction tRNA(Gly) + glycine + ATP = glycyl-tRNA(Gly) + AMP + diphosphate. The protein is Glycine--tRNA ligase alpha subunit (glyQ) of Xylella fastidiosa (strain 9a5c).